The primary structure comprises 508 residues: Steroid 17-alpha-hydroxylase/17,20 lyase (508 aa).

Asparagine 202 lines the substrate pocket. Cysteine 442 contacts heme.

The protein belongs to the cytochrome P450 family. Heme is required as a cofactor.

It is found in the endoplasmic reticulum membrane. The protein localises to the microsome membrane. The catalysed reaction is a C21-steroid + reduced [NADPH--hemoprotein reductase] + O2 = a 17alpha-hydroxy-C21-steroid + oxidized [NADPH--hemoprotein reductase] + H2O + H(+). It carries out the reaction progesterone + reduced [NADPH--hemoprotein reductase] + O2 = 17alpha-hydroxyprogesterone + oxidized [NADPH--hemoprotein reductase] + H2O + H(+). It catalyses the reaction pregnenolone + reduced [NADPH--hemoprotein reductase] + O2 = 17alpha-hydroxypregnenolone + oxidized [NADPH--hemoprotein reductase] + H2O + H(+). The enzyme catalyses 17alpha-hydroxyprogesterone + reduced [NADPH--hemoprotein reductase] + O2 = androst-4-ene-3,17-dione + acetate + oxidized [NADPH--hemoprotein reductase] + H2O + 2 H(+). The catalysed reaction is 17alpha-hydroxyprogesterone + reduced [NADPH--hemoprotein reductase] + O2 = 16alpha,17alpha-dihydroxyprogesterone + oxidized [NADPH--hemoprotein reductase] + H2O + H(+). It carries out the reaction 16alpha,17alpha-dihydroxyprogesterone + reduced [NADPH--hemoprotein reductase] + O2 = 6beta,16alpha,17alpha-trihydroxyprogesterone + oxidized [NADPH--hemoprotein reductase] + H2O + H(+). It catalyses the reaction 17alpha-hydroxypregnenolone + reduced [NADPH--hemoprotein reductase] + O2 = 3beta-hydroxyandrost-5-en-17-one + acetate + oxidized [NADPH--hemoprotein reductase] + H2O + 2 H(+). The enzyme catalyses 16alpha,17alpha-dihydroxypregnenolone + reduced [NADPH--hemoprotein reductase] + O2 = 3beta,16alpha-dihydroxy-androst-5-en-17-one + acetate + oxidized [NADPH--hemoprotein reductase] + H2O + 2 H(+). The catalysed reaction is 3beta-hydroxyandrost-5-en-17-one + reduced [NADPH--hemoprotein reductase] + O2 = 3beta,16alpha-dihydroxy-androst-5-en-17-one + oxidized [NADPH--hemoprotein reductase] + H2O + H(+). It carries out the reaction androst-4-ene-3,17-dione + reduced [NADPH--hemoprotein reductase] + O2 = 16alpha-hydroxyandrost-4-ene-3,17-dione + oxidized [NADPH--hemoprotein reductase] + H2O + H(+). The protein operates within steroid hormone biosynthesis. Its pathway is steroid biosynthesis; glucocorticoid biosynthesis. With respect to regulation, regulated predominantly by intracellular cAMP levels. The 17,20-lyase activity is stimulated by cytochrome b5, which acts as an allosteric effector increasing the Vmax of the lyase activity. A cytochrome P450 monooxygenase involved in corticoid and androgen biosynthesis. Catalyzes 17-alpha hydroxylation of C21 steroids, which is common for both pathways. A second oxidative step, required only for androgen synthesis, involves an acyl-carbon cleavage. The 17-alpha hydroxy intermediates, as part of adrenal glucocorticoids biosynthesis pathway, are precursors of cortisol. Hydroxylates steroid hormones, pregnenolone and progesterone to form 17-alpha hydroxy metabolites, followed by the cleavage of the C17-C20 bond to form C19 steroids, dehydroepiandrosterone (DHEA) and androstenedione. Has 16-alpha hydroxylase activity. Catalyzes 16-alpha hydroxylation of 17-alpha hydroxy pregnenolone, followed by the cleavage of the C17-C20 bond to form 16-alpha-hydroxy DHEA. Also 16-alpha hydroxylates androgens, relevant for estriol synthesis. Mechanistically, uses molecular oxygen inserting one oxygen atom into a substrate, and reducing the second into a water molecule, with two electrons provided by NADPH via cytochrome P450 reductase (CPR; NADPH-ferrihemoprotein reductase). This Macaca fascicularis (Crab-eating macaque) protein is Steroid 17-alpha-hydroxylase/17,20 lyase (CYP17A1).